We begin with the raw amino-acid sequence, 247 residues long: 3-deoxy-manno-octulosonate cytidylyltransferase (247 aa).

This sequence belongs to the KdsB family.

It is found in the cytoplasm. The catalysed reaction is 3-deoxy-alpha-D-manno-oct-2-ulosonate + CTP = CMP-3-deoxy-beta-D-manno-octulosonate + diphosphate. It functions in the pathway nucleotide-sugar biosynthesis; CMP-3-deoxy-D-manno-octulosonate biosynthesis; CMP-3-deoxy-D-manno-octulosonate from 3-deoxy-D-manno-octulosonate and CTP: step 1/1. The protein operates within bacterial outer membrane biogenesis; lipopolysaccharide biosynthesis. Activates KDO (a required 8-carbon sugar) for incorporation into bacterial lipopolysaccharide in Gram-negative bacteria. The sequence is that of 3-deoxy-manno-octulosonate cytidylyltransferase from Methylobacterium radiotolerans (strain ATCC 27329 / DSM 1819 / JCM 2831 / NBRC 15690 / NCIMB 10815 / 0-1).